We begin with the raw amino-acid sequence, 191 residues long: Programmed cell death protein 6 (191 aa).

A2 bears the N-acetylalanine mark. EF-hand domains lie at 23–58 (PDQS…GTWT), 59–89 (PFNP…TGVW), 90–125 (KYIT…FGYR), 126–161 (LSDQ…LQRL), and 162–191 (TDIF…FSIV). Residues D36, D38, S40, V42, and E47 each contribute to the Ca(2+) site. Ca(2+)-binding residues include D103, D105, S107, M109, and E114. D169, D171, D173, and W175 together coordinate Mg(2+).

As to quaternary structure, homodimer and heterodimer; heterodimerizes (via the EF-hand 5) with PEF1. Isoform 1 and isoform 2 self-associate; probably forming homodimers. Interacts with CPNE4 (via VWFA domain). Interacts with PDCD6IP; the interaction is calcium-dependent. Interacts with RBM22. Interacts with PLSCR4. Interacts with ANXA7 and TSG101. Interacts with DAPK1. Interacts with SEC31A; the interaction is calcium-dependent and promotes monoubiquitination of SEC31A. Interacts with ANXA11 (via N-terminus); the interaction is calcium-dependent. Interacts with PLSCR3 (via N-terminus); the interaction is calcium-dependent. Interacts with MCOLN1; the interaction is calcium-dependent. Interacts with KDR; the interaction is calcium-dependent. Interacts with HEBP2; the interaction is calcium-dependent. Interacts with TFG. Isoform 1: Interacts with SHISA5, leading to stabilize it. Isoform 2: Does not interact with SHISA5. Isoform 2: Does not interact with PDCD6IP, TSG101, ANXA7 and ANXA11.

The protein resides in the endoplasmic reticulum membrane. It is found in the cytoplasmic vesicle. It localises to the COPII-coated vesicle membrane. Its subcellular location is the cytoplasm. The protein localises to the nucleus. The protein resides in the endosome. Its function is as follows. Calcium sensor that plays a key role in processes such as endoplasmic reticulum (ER)-Golgi vesicular transport, endosomal biogenesis or membrane repair. Acts as an adapter that bridges unrelated proteins or stabilizes weak protein-protein complexes in response to calcium: calcium-binding triggers exposure of apolar surface, promoting interaction with different sets of proteins thanks to 3 different hydrophobic pockets, leading to translocation to membranes. Involved in ER-Golgi transport. Regulates ER-Golgi transport by promoting the association between PDCD6IP and TSG101, thereby bridging together the ESCRT-III and ESCRT-I complexes. Together with PEF1, acts as a calcium-dependent adapter for the BCR(KLHL12) complex, a complex involved in ER-Golgi transport by regulating the size of COPII coats. In response to cytosolic calcium increase, the heterodimer formed with PEF1 interacts with, and bridges together the BCR(KLHL12) complex and SEC31 (SEC31A or SEC31B), promoting monoubiquitination of SEC31 and subsequent collagen export, which is required for neural crest specification. Involved in the regulation of the distribution and function of MCOLN1 in the endosomal pathway. Promotes localization and polymerization of TFG at endoplasmic reticulum exit site. Required for T-cell receptor-, Fas-, and glucocorticoid-induced apoptosis. May mediate Ca(2+)-regulated signals along the death pathway: interaction with DAPK1 can accelerate apoptotic cell death by increasing caspase-3 activity. Its role in apoptosis may however be indirect, as suggested by knockout experiments. May inhibit KDR/VEGFR2-dependent angiogenesis; the function involves inhibition of VEGF-induced phosphorylation of the Akt signaling pathway. Has a lower Ca(2+) affinity than isoform 1. In Rattus norvegicus (Rat), this protein is Programmed cell death protein 6.